The primary structure comprises 468 residues: ATP synthase subunit beta (468 aa).

155-162 (GGAGVGKT) provides a ligand contact to ATP.

This sequence belongs to the ATPase alpha/beta chains family. In terms of assembly, F-type ATPases have 2 components, CF(1) - the catalytic core - and CF(0) - the membrane proton channel. CF(1) has five subunits: alpha(3), beta(3), gamma(1), delta(1), epsilon(1). CF(0) has three main subunits: a(1), b(2) and c(9-12). The alpha and beta chains form an alternating ring which encloses part of the gamma chain. CF(1) is attached to CF(0) by a central stalk formed by the gamma and epsilon chains, while a peripheral stalk is formed by the delta and b chains.

The protein localises to the cell membrane. The enzyme catalyses ATP + H2O + 4 H(+)(in) = ADP + phosphate + 5 H(+)(out). Functionally, produces ATP from ADP in the presence of a proton gradient across the membrane. The catalytic sites are hosted primarily by the beta subunits. The sequence is that of ATP synthase subunit beta from Bacillus cereus (strain ATCC 10987 / NRS 248).